Reading from the N-terminus, the 49-residue chain is uncharacterized protein (49 aa).

This is an uncharacterized protein from Enterobacteria phage T4 (Bacteriophage T4).